A 602-amino-acid polypeptide reads, in one-letter code: Aspartate--tRNA(Asp/Asn) ligase (602 aa).

Glu-175 contacts L-aspartate. An aspartate region spans residues 199-202 (QIFK). Arg-221 contributes to the L-aspartate binding site. Residues 221–223 (RDE) and Gln-230 contribute to the ATP site. Position 458 (His-458) interacts with L-aspartate. Residue Glu-492 coordinates ATP. Arg-499 lines the L-aspartate pocket. 544-547 (GLDR) contributes to the ATP binding site.

Belongs to the class-II aminoacyl-tRNA synthetase family. Type 1 subfamily. In terms of assembly, homodimer.

The protein localises to the cytoplasm. The catalysed reaction is tRNA(Asx) + L-aspartate + ATP = L-aspartyl-tRNA(Asx) + AMP + diphosphate. Functionally, aspartyl-tRNA synthetase with relaxed tRNA specificity since it is able to aspartylate not only its cognate tRNA(Asp) but also tRNA(Asn). Reaction proceeds in two steps: L-aspartate is first activated by ATP to form Asp-AMP and then transferred to the acceptor end of tRNA(Asp/Asn). This Cupriavidus metallidurans (strain ATCC 43123 / DSM 2839 / NBRC 102507 / CH34) (Ralstonia metallidurans) protein is Aspartate--tRNA(Asp/Asn) ligase.